The sequence spans 370 residues: Histidinol-phosphate aminotransferase (370 aa).

Lys230 carries the N6-(pyridoxal phosphate)lysine modification.

Belongs to the class-II pyridoxal-phosphate-dependent aminotransferase family. Histidinol-phosphate aminotransferase subfamily. Homodimer. Pyridoxal 5'-phosphate is required as a cofactor.

The enzyme catalyses L-histidinol phosphate + 2-oxoglutarate = 3-(imidazol-4-yl)-2-oxopropyl phosphate + L-glutamate. It participates in amino-acid biosynthesis; L-histidine biosynthesis; L-histidine from 5-phospho-alpha-D-ribose 1-diphosphate: step 7/9. The protein is Histidinol-phosphate aminotransferase of Leptospira interrogans serogroup Icterohaemorrhagiae serovar Lai (strain 56601).